Consider the following 1302-residue polypeptide: Cingulin-like protein 1 (1302 aa).

The interval 1–554 (MELYFGEYQH…ELTQQTNEET (554 aa)) is head. The short motif at 37-51 (AGSYGVSIRVQGIDG) is the ZIM element. A disordered region spans residues 75–104 (PFPPPVINNLPLHSSNGSVPKENSEELQLP). 2 positions are modified to phosphoserine: Ser112 and Ser202. Disordered regions lie at residues 186–209 (KKPW…EDPA), 251–305 (FTSG…TPTS), and 364–392 (PGLQ…VDSA). Polar residues predominate over residues 195–204 (PSNSQPTSPS). The span at 264–282 (AHPETKKTRPDVLPFRRQD) shows a compositional bias: basic and acidic residues. Phosphoserine is present on residues Ser283, Ser297, and Ser298. Positions 296–305 (SSSSSTTPTS) are enriched in low complexity. A compositionally biased stretch (basic residues) spans 366–377 (LQRRGRSGKRNR). The segment covering 378-388 (INTDDRKRSRS) has biased composition (basic and acidic residues). Phosphoserine is present on residues Ser388, Ser391, and Ser486. Positions 604–1258 (NSTSEVKDLL…QLNSMKKDLR (655 aa)) form a coiled coil. The span at 655-664 (RSQHNEKVEE) shows a compositional bias: basic and acidic residues. Residues 655-675 (RSQHNEKVEENSTLQQRLEES) are disordered. A Phosphoserine modification is found at Ser708. 2 disordered regions span residues 903–929 (AAQG…SEQK) and 1263–1287 (PSKV…YEAP). Basic and acidic residues predominate over residues 917–929 (QLSEKLKEESEQK). Positions 1263-1302 (PSKVLDDMDDDDDLSTDGGSLYEAPVSYTFSKDSTVASQI) are tail.

This sequence belongs to the cingulin family. In terms of assembly, homodimer or oligomer. Interacts with CD2AP and SH3BP1; probably part of a complex at cell junctions. Smooth muscle, spleen, testis, fetal brain, amygdala, corpus callosum, cerebellum, thalamus and subthalamic nucleus of adult brain.

Its subcellular location is the cell junction. It is found in the tight junction. Its function is as follows. May be involved in anchoring the apical junctional complex, especially tight junctions, to actin-based cytoskeletons. The protein is Cingulin-like protein 1 (CGNL1) of Homo sapiens (Human).